The sequence spans 36 residues: Serum amyloid P-component (36 aa).

Residues 6-36 enclose the Pentraxin (PTX) domain; it reads SGKVFVIPMATSTSHVKLHARVSEPISAMTM.

This sequence belongs to the pentraxin family. In terms of assembly, homopentamer. Discoid arrangement of 5 covalently bound subunits. It depends on Ca(2+) as a cofactor.

It is found in the secreted. This is Serum amyloid P-component from Salmo salar (Atlantic salmon).